Here is a 98-residue protein sequence, read N- to C-terminus: Large ribosomal subunit protein uL23 (98 aa).

Belongs to the universal ribosomal protein uL23 family. Part of the 50S ribosomal subunit. Contacts protein L29, and trigger factor when it is bound to the ribosome.

In terms of biological role, one of the early assembly proteins it binds 23S rRNA. One of the proteins that surrounds the polypeptide exit tunnel on the outside of the ribosome. Forms the main docking site for trigger factor binding to the ribosome. This chain is Large ribosomal subunit protein uL23, found in Bifidobacterium animalis subsp. lactis (strain AD011).